The sequence spans 196 residues: Xanthine phosphoribosyltransferase (196 aa).

Leu-20 and Asn-27 together coordinate xanthine. Position 128–132 (128–132 (ATGAA)) interacts with 5-phospho-alpha-D-ribose 1-diphosphate. Lys-156 is a binding site for xanthine.

Belongs to the purine/pyrimidine phosphoribosyltransferase family. Xpt subfamily. In terms of assembly, homodimer.

It localises to the cytoplasm. It carries out the reaction XMP + diphosphate = xanthine + 5-phospho-alpha-D-ribose 1-diphosphate. It participates in purine metabolism; XMP biosynthesis via salvage pathway; XMP from xanthine: step 1/1. Its function is as follows. Converts the preformed base xanthine, a product of nucleic acid breakdown, to xanthosine 5'-monophosphate (XMP), so it can be reused for RNA or DNA synthesis. The chain is Xanthine phosphoribosyltransferase from Brevibacillus brevis (strain 47 / JCM 6285 / NBRC 100599).